A 365-amino-acid chain; its full sequence is tRNA N6-adenosine threonylcarbamoyltransferase (365 aa).

Residues His-119 and His-123 each coordinate Fe cation. Residues 141-145 (LVSGG), Asp-174, Gly-187, and Asn-288 contribute to the substrate site. Asp-316 lines the Fe cation pocket.

Belongs to the KAE1 / TsaD family. The cofactor is Fe(2+).

It is found in the cytoplasm. It catalyses the reaction L-threonylcarbamoyladenylate + adenosine(37) in tRNA = N(6)-L-threonylcarbamoyladenosine(37) in tRNA + AMP + H(+). Required for the formation of a threonylcarbamoyl group on adenosine at position 37 (t(6)A37) in tRNAs that read codons beginning with adenine. Is involved in the transfer of the threonylcarbamoyl moiety of threonylcarbamoyl-AMP (TC-AMP) to the N6 group of A37, together with TsaE and TsaB. TsaD likely plays a direct catalytic role in this reaction. In Rhizobium johnstonii (strain DSM 114642 / LMG 32736 / 3841) (Rhizobium leguminosarum bv. viciae), this protein is tRNA N6-adenosine threonylcarbamoyltransferase.